Reading from the N-terminus, the 185-residue chain is Elongation factor P (185 aa).

It belongs to the elongation factor P family.

It localises to the cytoplasm. It functions in the pathway protein biosynthesis; polypeptide chain elongation. Involved in peptide bond synthesis. Stimulates efficient translation and peptide-bond synthesis on native or reconstituted 70S ribosomes in vitro. Probably functions indirectly by altering the affinity of the ribosome for aminoacyl-tRNA, thus increasing their reactivity as acceptors for peptidyl transferase. In Trichormus variabilis (strain ATCC 29413 / PCC 7937) (Anabaena variabilis), this protein is Elongation factor P.